Here is a 450-residue protein sequence, read N- to C-terminus: Putative cysteine--tRNA ligase 2 (450 aa).

The short motif at 29-39 (ITPYKSTHLGH) is the 'HIGH' region element. Residues 270–274 (KMSKS) carry the 'KMSKS' region motif. Residue Lys-273 coordinates ATP. The disordered stretch occupies residues 372–392 (PIHPKHSPQMRDYSEHGSAGQ).

This sequence belongs to the class-I aminoacyl-tRNA synthetase family. In terms of assembly, monomer.

Its subcellular location is the cytoplasm. The catalysed reaction is tRNA(Cys) + L-cysteine + ATP = L-cysteinyl-tRNA(Cys) + AMP + diphosphate. This Tropheryma whipplei (strain TW08/27) (Whipple's bacillus) protein is Putative cysteine--tRNA ligase 2 (cysS2).